The following is a 72-amino-acid chain: Translation initiation factor IF-1 (72 aa).

The S1-like domain occupies 1 to 72 (MAKDDVIEVE…NRGRITYRFK (72 aa)). Residue tyrosine 60 is modified to Phosphotyrosine.

This sequence belongs to the IF-1 family. In terms of assembly, component of the 30S ribosomal translation pre-initiation complex which assembles on the 30S ribosome in the order IF-2 and IF-3, IF-1 and N-formylmethionyl-tRNA(fMet); mRNA recruitment can occur at any time during PIC assembly.

The protein resides in the cytoplasm. One of the essential components for the initiation of protein synthesis. Stabilizes the binding of IF-2 and IF-3 on the 30S subunit to which N-formylmethionyl-tRNA(fMet) subsequently binds. Helps modulate mRNA selection, yielding the 30S pre-initiation complex (PIC). Upon addition of the 50S ribosomal subunit IF-1, IF-2 and IF-3 are released leaving the mature 70S translation initiation complex. In Bacillus thuringiensis (strain Al Hakam), this protein is Translation initiation factor IF-1.